A 185-amino-acid polypeptide reads, in one-letter code: Photosystem I assembly protein Ycf4 (185 aa).

Helical transmembrane passes span 20–40 and 57–77; these read GNFFWACILFLGSLGFLSVGA and ILFFPQGVVMSFYGIAGLFIS.

It belongs to the Ycf4 family.

Its subcellular location is the plastid. It localises to the chloroplast thylakoid membrane. Functionally, seems to be required for the assembly of the photosystem I complex. The polypeptide is Photosystem I assembly protein Ycf4 (Lolium perenne (Perennial ryegrass)).